Here is a 430-residue protein sequence, read N- to C-terminus: Tektin-2 (430 aa).

Coiled-coil stretches lie at residues 81–162 (CLTD…FEKL) and 265–379 (FRKR…DIAC).

Belongs to the tektin family. Microtubule inner protein component of sperm flagellar doublet microtubules. May interact with CCDC172. Post-translationally, tyrosine phosphorylated. In terms of processing, ubiquitinated, leading to its degradation. Deubiquitinated by USP16, promoting its stability. In terms of tissue distribution, expressed in trachea multiciliated cells.

The protein localises to the cytoplasm. Its subcellular location is the cytoskeleton. It localises to the cilium axoneme. The protein resides in the flagellum axoneme. It is found in the microtubule organizing center. Microtubule inner protein (MIP) part of the dynein-decorated doublet microtubules (DMTs) in cilia and flagellar axoneme. Plays a key role in the assembly or attachment of the inner dynein arm to microtubules in sperm flagella and tracheal cilia. Forms filamentous polymers in the walls of ciliary and flagellar microtubules. The chain is Tektin-2 (TEKT2) from Bos taurus (Bovine).